Here is a 261-residue protein sequence, read N- to C-terminus: Hydroxyethylthiazole kinase (261 aa).

Met-39 provides a ligand contact to substrate. Positions 115 and 159 each coordinate ATP. Gly-186 contacts substrate.

This sequence belongs to the Thz kinase family. The cofactor is Mg(2+).

It carries out the reaction 5-(2-hydroxyethyl)-4-methylthiazole + ATP = 4-methyl-5-(2-phosphooxyethyl)-thiazole + ADP + H(+). The protein operates within cofactor biosynthesis; thiamine diphosphate biosynthesis; 4-methyl-5-(2-phosphoethyl)-thiazole from 5-(2-hydroxyethyl)-4-methylthiazole: step 1/1. Functionally, catalyzes the phosphorylation of the hydroxyl group of 4-methyl-5-beta-hydroxyethylthiazole (THZ). This Macrococcus caseolyticus (strain JCSC5402) (Macrococcoides caseolyticum) protein is Hydroxyethylthiazole kinase.